Here is a 640-residue protein sequence, read N- to C-terminus: SUMO-activating enzyme subunit 2 (640 aa).

ATP-binding positions include 24 to 29 (GAGGIG), aspartate 48, 56 to 59 (NLNR), lysine 72, 95 to 96 (SI), and 117 to 122 (DNRAAR). Zn(2+) is bound by residues cysteine 158 and cysteine 161. Residue lysine 164 forms a Glycyl lysine isopeptide (Lys-Gly) (interchain with G-Cter in SUMO1) linkage. Catalysis depends on cysteine 173, which acts as the Glycyl thioester intermediate. A Glycyl lysine isopeptide (Lys-Gly) (interchain with G-Cter in SUMO) cross-link involves residue lysine 190. The segment at 202–231 (ADQEVSPDRADPEAAWEPTEAEARARASNE) is disordered. A Phosphoserine modification is found at serine 207. Residues 222 to 231 (AEARARASNE) show a composition bias toward basic and acidic residues. Lysine 236 is covalently cross-linked (Glycyl lysine isopeptide (Lys-Gly) (interchain with G-Cter in SUMO1); alternate). Glycyl lysine isopeptide (Lys-Gly) (interchain with G-Cter in SUMO2); alternate cross-links involve residues lysine 236 and lysine 257. Residues lysine 257 and lysine 271 each participate in a glycyl lysine isopeptide (Lys-Gly) (interchain with G-Cter in SUMO); alternate cross-link. At lysine 271 the chain carries N6-acetyllysine; alternate. Lysine 275 is covalently cross-linked (Glycyl lysine isopeptide (Lys-Gly) (interchain with G-Cter in SUMO)). Lysine 371 is covalently cross-linked (Glycyl lysine isopeptide (Lys-Gly) (interchain with G-Cter in SUMO2)). Lysine 420 participates in a covalent cross-link: Glycyl lysine isopeptide (Lys-Gly) (interchain with G-Cter in SUMO1); alternate. Residue lysine 420 forms a Glycyl lysine isopeptide (Lys-Gly) (interchain with G-Cter in SUMO2); alternate linkage. Zn(2+) is bound by residues cysteine 441 and cysteine 444. Serine 507 is modified (phosphoserine). Lysine 540 is covalently cross-linked (Glycyl lysine isopeptide (Lys-Gly) (interchain with G-Cter in SUMO2)). Positions 551–563 (PEKVGPKQAEDAA) are enriched in basic and acidic residues. The segment at 551–640 (PEKVGPKQAE…EELDDVIALD (90 aa)) is disordered. Positions 565 to 582 (SITNGSDDGAQPSTSTAQ) are enriched in polar residues. Residues 583 to 597 (EQDDVLIVDSDEEDS) show a composition bias toward acidic residues. Serine 592 bears the Phosphoserine mark. The span at 606–630 (EERSRKRKLDEKENLSAKRSRIEQK) shows a compositional bias: basic and acidic residues. Lysine 611 is covalently cross-linked (Glycyl lysine isopeptide (Lys-Gly) (interchain with G-Cter in SUMO)). Residue lysine 613 forms a Glycyl lysine isopeptide (Lys-Gly) (interchain with G-Cter in SUMO); alternate linkage. N6-acetyllysine; alternate is present on lysine 613. Residues lysine 617 and lysine 623 each participate in a glycyl lysine isopeptide (Lys-Gly) (interchain with G-Cter in SUMO) cross-link. Over residues 631 to 640 (EELDDVIALD) the composition is skewed to acidic residues.

Belongs to the ubiquitin-activating E1 family. In terms of assembly, heterodimer of SAE1 and UBA2/SAE2. The heterodimer corresponds to the two domains that are encoded on a single polypeptide chain in ubiquitin-activating enzyme E1. Interacts with UBE2I. In terms of processing, sumoylated with SUMO1 and SUMO2/3 and by UBC9. Sumoylation at Lys-236 inhibits enzymatic activity. Sumoylation at the C-terminal lysine cluster plays an essential role in nuclear trafficking.

Its subcellular location is the cytoplasm. The protein resides in the nucleus. Its pathway is protein modification; protein sumoylation. Functionally, the heterodimer acts as an E1 ligase for SUMO1, SUMO2, SUMO3, and probably SUMO4. It mediates ATP-dependent activation of SUMO proteins followed by formation of a thioester bond between a SUMO protein and a conserved active site cysteine residue on UBA2/SAE2. The chain is SUMO-activating enzyme subunit 2 (UBA2) from Homo sapiens (Human).